Here is a 510-residue protein sequence, read N- to C-terminus: Serine carboxypeptidase-like 48 (510 aa).

Positions 1–25 are cleaved as a signal peptide; sequence MDSKTTFLTFLLCIFIFSHFSPSTS. Disulfide bonds link Cys-141/Cys-383, Cys-309/Cys-326, and Cys-349/Cys-354. N-linked (GlcNAc...) asparagine glycans are attached at residues Asn-158 and Asn-159. Residue Ser-231 is part of the active site. Residues Asp-421 and His-478 contribute to the active site.

This sequence belongs to the peptidase S10 family. As to expression, ubiquitous.

Its subcellular location is the secreted. In terms of biological role, probable carboxypeptidase. This is Serine carboxypeptidase-like 48 (SCPL48) from Arabidopsis thaliana (Mouse-ear cress).